We begin with the raw amino-acid sequence, 323 residues long: Serine/threonine-protein kinase-transforming protein raf (323 aa).

The 261-residue stretch at 24-284 folds into the Protein kinase domain; sequence VMLSTRIGSG…PQILSSIELL (261 aa). ATP contacts are provided by residues 30–38 and Lys50; that span reads IGSGSFGTV. Asp143 acts as the Proton acceptor in catalysis.

Belongs to the protein kinase superfamily. TKL Ser/Thr protein kinase family. RAF subfamily.

It catalyses the reaction L-seryl-[protein] + ATP = O-phospho-L-seryl-[protein] + ADP + H(+). It carries out the reaction L-threonyl-[protein] + ATP = O-phospho-L-threonyl-[protein] + ADP + H(+). The protein is Serine/threonine-protein kinase-transforming protein raf (V-RAF) of Murine sarcoma virus 3611.